The primary structure comprises 546 residues: E3 ubiquitin-protein ligase NEURL1B (546 aa).

The NHR 1 domain occupies 38–194; it reads APRFHAQAKG…ITDEVQLLES (157 aa). At T199 the chain carries Phosphothreonine. In terms of domain architecture, NHR 2 spans 270 to 424; sequence ELRFHATRGP…GVAGQLRLLG (155 aa). Residues 429 to 490 are disordered; it reads SSETMTPSGS…FSAPEPTGSR (62 aa). Low complexity predominate over residues 457-471; that stretch reads SSSASESSLVTAPSS. The segment at 494–534 adopts an RING-type zinc-finger fold; it reads CTVCFDSEVDTVIYTCGHMCLCHGCGLRLRRQARACCPICR.

Interacts with DLL1 and DLL4. Expressed in the limb buds and dorsal root ganglia. Expressed in brain and kidney and at low levels in the heart.

The protein localises to the cytoplasm. The catalysed reaction is S-ubiquitinyl-[E2 ubiquitin-conjugating enzyme]-L-cysteine + [acceptor protein]-L-lysine = [E2 ubiquitin-conjugating enzyme]-L-cysteine + N(6)-ubiquitinyl-[acceptor protein]-L-lysine.. It participates in protein modification; protein ubiquitination. In terms of biological role, E3 ubiquitin-protein ligase involved in regulation of the Notch pathway through influencing the stability and activity of several Notch ligands. The polypeptide is E3 ubiquitin-protein ligase NEURL1B (Neurl1b) (Mus musculus (Mouse)).